A 229-amino-acid chain; its full sequence is Probable transmembrane reductase CYB561D1 (229 aa).

Over 1–24 (MQPLEVGLVPAPAGEPRLTRWLRR) the chain is Cytoplasmic. The region spanning 22-224 (LRRGSGILAH…HQISRSYLPR (203 aa)) is the Cytochrome b561 domain. The helical transmembrane segment at 25-45 (GSGILAHLVALGFTIFLTALS) threads the bilayer. Topologically, residues 46-53 (RPGTSLFS) are lumenal. Residues 54-74 (WHPVFMALAFCLCMAEAILLF) traverse the membrane as a helical segment. Heme b is bound at residue His55. At 75-91 (SPEHSLFFFCSRKARIR) the chain is on the cytoplasmic side. A helical transmembrane segment spans residues 92 to 112 (LHWAGQTLAILCAALGLGFII). 2 residues coordinate heme b: His93 and His127. Residues 113–128 (SSRTRSELPHLVSWHS) lie on the Lumenal side of the membrane. The chain crosses the membrane as a helical span at residues 129–149 (WVGALTLLATAVQALCGLCLL). At 150–169 (CPRAARVSRVARLKLYHLTC) the chain is on the cytoplasmic side. His166 lines the heme b pocket. Residues 170 to 190 (GLVVYLMATVTVLLGMYSVWF) traverse the membrane as a helical segment. The Lumenal portion of the chain corresponds to 191–193 (QAQ). Residues 194 to 214 (IKGAAWYLCLALPVYPALVIM) form a helical membrane-spanning segment. The Cytoplasmic segment spans residues 215-229 (HQISRSYLPRKKMEM).

It depends on heme b as a cofactor.

Its subcellular location is the membrane. The enzyme catalyses monodehydro-L-ascorbate radical(out) + L-ascorbate(in) = monodehydro-L-ascorbate radical(in) + L-ascorbate(out). The catalysed reaction is Fe(3+)(out) + L-ascorbate(in) = monodehydro-L-ascorbate radical(in) + Fe(2+)(out) + H(+). Probable transmembrane reductase that may use ascorbate as an electron donor and transfer electrons across membranes to reduce monodehydro-L-ascorbate radical and iron cations Fe(3+) in another cellular compartment. This Homo sapiens (Human) protein is Probable transmembrane reductase CYB561D1.